Reading from the N-terminus, the 487-residue chain is Glutamate--tRNA ligase (487 aa).

The 'HIGH' region motif lies at 10–20 (PSPTGYMHVGN). The 'KMSKS' region signature appears at 251 to 255 (KLSKR). Residue lysine 254 participates in ATP binding.

This sequence belongs to the class-I aminoacyl-tRNA synthetase family. Glutamate--tRNA ligase type 1 subfamily. As to quaternary structure, monomer.

Its subcellular location is the cytoplasm. It catalyses the reaction tRNA(Glu) + L-glutamate + ATP = L-glutamyl-tRNA(Glu) + AMP + diphosphate. Catalyzes the attachment of glutamate to tRNA(Glu) in a two-step reaction: glutamate is first activated by ATP to form Glu-AMP and then transferred to the acceptor end of tRNA(Glu). The polypeptide is Glutamate--tRNA ligase (Clostridium kluyveri (strain ATCC 8527 / DSM 555 / NBRC 12016 / NCIMB 10680 / K1)).